Consider the following 82-residue polypeptide: Large ribosomal subunit protein uL23 (82 aa).

It belongs to the universal ribosomal protein uL23 family. In terms of assembly, part of the 50S ribosomal subunit. Contacts protein L29.

In terms of biological role, binds to 23S rRNA. One of the proteins that surrounds the polypeptide exit tunnel on the outside of the ribosome. The chain is Large ribosomal subunit protein uL23 from Methanosarcina acetivorans (strain ATCC 35395 / DSM 2834 / JCM 12185 / C2A).